The sequence spans 351 residues: Anaerobic nitrite reductase Glb1-2 (351 aa).

Globin domains follow at residues 13-162 (DFTE…VEMK) and 184-333 (CFTE…AEMK). Ser-56, Lys-70, His-74, Lys-104, Thr-108, His-109, Ser-227, Lys-241, His-245, Lys-275, Thr-279, and His-280 together coordinate heme b. Positions 331-351 (EMKKTDHDHQTNVEDKSKPSS) are disordered.

The protein belongs to the plant globin family. In terms of assembly, monomer. Heme b serves as cofactor. As to expression, predominantly expressed in nodules and roots, and, to a lesser extent, in leaves, at low levels in pods, but barely in stems, petioles, buds and flowers. In terms of tissue distribution, mainly expressed in nodules and roots at low levels, and barely in leaves. Expressed at very low levels in nodules, roots and pods.

The protein resides in the cytoplasm. Its subcellular location is the nucleus. The catalysed reaction is Fe(III)-heme b-[protein] + nitric oxide + H2O = Fe(II)-heme b-[protein] + nitrite + 2 H(+). Phytoglobin that regulates the fine tuning of nitric oxide (NO) concentration in the cytosol in response to sudden changes in O(2) availability, and performs both symbiotic and nonsymbiotic functions. Exhibits NO dioxygenase activity in the presence of O(2) but nitrite reductase (NiR) activity in the absence of O(2) (e.g. during flooding or in waterlogged soil). May not function as an oxygen storage or transport protein. Extremely reactive toward the physiological ligands O(2), nitric oxide (NO), and nitrite with a very high affinity for O(2) through an hexacoordinate heme iron because of a very low dissociation constant. Functionally, very high affinity for O(2) through two hexacoordinate heme irons. Extremely reactive toward the physiological ligands O(2), nitric oxide (NO), and nitrite. In terms of biological role, very high affinity for O(2) through a single hexacoordinate heme iron. Extremely reactive toward the physiological ligands O(2), nitric oxide (NO), and nitrite. The polypeptide is Anaerobic nitrite reductase Glb1-2 (Medicago truncatula (Barrel medic)).